Consider the following 457-residue polypeptide: COBRA-like protein 3 (457 aa).

An N-terminal signal peptide occupies residues 1-35 (MAVGGAGSSRSVAPCCCCAVLLAAALLFSAPATTE). Residues N45, N170, N178, N217, N242, N258, N326, N341, and N361 are each glycosylated (N-linked (GlcNAc...) asparagine). N430 is lipidated: GPI-anchor amidated asparagine. Positions 431–457 (ASPLTKQPLTLSVLVFSIVLATLLAYA) are cleaved as a propeptide — removed in mature form. The chain crosses the membrane as a helical span at residues 437–457 (QPLTLSVLVFSIVLATLLAYA).

Belongs to the COBRA family.

It localises to the cell membrane. Involved in determining the orientation of cell expansion, probably by playing an important role in cellulose deposition. May act by recruiting cellulose synthesizing complexes to discrete positions on the cell surface. This chain is COBRA-like protein 3 (BC1L4), found in Oryza sativa subsp. japonica (Rice).